Reading from the N-terminus, the 288-residue chain is Single myb histone 4 (288 aa).

3 disordered regions span residues 1 to 42, 62 to 87, and 181 to 206; these read MGAP…PVLS, GLGS…SQPL, and DSLA…KPSK. The region spanning 1-60 is the HTH myb-type domain; it reads MGAPKQKWTSEEEDALRAGVRKHGAGKWRTIQKDPEFSPVLSSRSNIDLKDKWRNLSFSA. Positions 28–56 form a DNA-binding region, H-T-H motif; the sequence is WRTIQKDPEFSPVLSSRSNIDLKDKWRNL. Low complexity predominate over residues 76–87; the sequence is PSSSPSSSSQPL. The H15 domain occupies 113–181; the sequence is TLPKYGAMIM…KIDKSYRLPD (69 aa). A coiled-coil region spans residues 230 to 250; sequence KVADAEAKAHDAHDQTMEAER.

Belongs to the histone H1/H5 family. SMH subfamily. Forms a homodimer and heterodimers.

Its subcellular location is the nucleus. The protein resides in the chromosome. It localises to the nucleolus. It is found in the telomere. Its function is as follows. Binds preferentially double-stranded telomeric repeats, but may also bind to the single telomeric strand. This Zea mays (Maize) protein is Single myb histone 4 (SMH4).